Consider the following 1084-residue polypeptide: Cellulose synthase A catalytic subunit 2 [UDP-forming] (1084 aa).

Position 1 is an N-acetylmethionine (Met1). Over 1–278 (MNTGGRLIAG…RSSRINPYRM (278 aa)) the chain is Cytoplasmic. Positions 39, 42, 58, 61, 66, 69, 81, and 84 each coordinate Zn(2+). The segment at 39 to 85 (CQICGDEIELTVSSELFVACNECAFPVCRPCYEYERREGNQACPQCK) adopts an RING-type; degenerate zinc-finger fold. Positions 230–259 (IKHEGGNNGRGSNDDDELDDPDMPMMDEGR) are disordered. Residues 279–299 (LILCRLAILGLFFHYRILHPV) traverse the membrane as a helical segment. Residues 300-301 (ND) are Extracellular-facing. The chain crosses the membrane as a helical span at residues 302–322 (AYGLWLTSVICEIWFAVSWIL). Residues 323-867 (DQFPKWYPIE…INSVVYPWTS (545 aa)) lie on the Cytoplasmic side of the membrane. Residues Ser361, Lys367, Glu368, and Asp397 each coordinate UDP-alpha-D-glucose. Residue Asp397 is part of the active site. The stretch at 451–477 (VRERRAMKRDYEEFKVKINALVATAQK) forms a coiled coil. Lys538 is a UDP-alpha-D-glucose binding site. Residues Lys539 and Asp563 each contribute to the Mn(2+) site. Asp784 is an active-site residue. The chain crosses the membrane as a helical span at residues 868-888 (LPLIVYCSLPAVCLLTGKFIV). Residues 889–893 (PEISN) are Extracellular-facing. A helical membrane pass occupies residues 894–914 (YAGILFMLMFISIAVTGILEM). Topologically, residues 915–929 (QWGGVGIDDWWRNEQ) are cytoplasmic. The helical transmembrane segment at 930-950 (FWVIGGASSHLFALFQGLLKV) threads the bilayer. Over 951–979 (LAGVNTNFTVTSKAADDGAFSELYIFKWT) the chain is Extracellular. N-linked (GlcNAc...) asparagine glycosylation is present at Asn957. A helical transmembrane segment spans residues 980-1000 (TLLIPPTTLLIINIIGVIVGV). Topologically, residues 1001–1011 (SDAISNGYDSW) are cytoplasmic. A helical transmembrane segment spans residues 1012-1032 (GPLFGRLFFALWVIVHLYPFL). At 1033–1041 (KGMLGKQDK) the chain is on the extracellular side. The helical transmembrane segment at 1042-1062 (MPTIIVVWSILLASILTLLWV) threads the bilayer. Over 1063 to 1084 (RVNPFVAKGGPVLEICGLNCGN) the chain is Cytoplasmic.

The protein belongs to the glycosyltransferase 2 family. Plant cellulose synthase subfamily. In terms of assembly, homodimer. Interaction through zinc finger domain. Requires Mn(2+) as cofactor. Zn(2+) is required as a cofactor. In terms of tissue distribution, strongly and ubiquitously expressed. Localized in some dividing and expanding cells, as well as in vascular tissues.

The protein resides in the cell membrane. It carries out the reaction [(1-&gt;4)-beta-D-glucosyl](n) + UDP-alpha-D-glucose = [(1-&gt;4)-beta-D-glucosyl](n+1) + UDP + H(+). It functions in the pathway glycan metabolism; plant cellulose biosynthesis. Its function is as follows. Catalytic subunit of cellulose synthase terminal complexes ('rosettes'), required for beta-1,4-glucan microfibril crystallization, a major mechanism of the cell wall formation. Involved in the primary cell wall formation. This Arabidopsis thaliana (Mouse-ear cress) protein is Cellulose synthase A catalytic subunit 2 [UDP-forming].